The sequence spans 59 residues: Large ribosomal subunit protein bL32 (59 aa).

The interval 1 to 20 (MAVPRNRHSNARKNIRRSHH) is disordered.

Belongs to the bacterial ribosomal protein bL32 family.

This chain is Large ribosomal subunit protein bL32 (rpmF), found in Chlamydia muridarum (strain MoPn / Nigg).